The sequence spans 302 residues: Transmembrane protein 191C (302 aa).

2 disordered regions span residues 1-21 (MAAT…GRQR) and 54-73 (LRRR…EAAR). A coiled-coil region spans residues 5–160 (QELLLQLQKD…EKLQQDALQT (156 aa)). The chain crosses the membrane as a helical span at residues 238 to 258 (VLGALQVLLTLPLLFLGLSLL).

Belongs to the TMEM191 family.

Its subcellular location is the membrane. The sequence is that of Transmembrane protein 191C from Homo sapiens (Human).